Reading from the N-terminus, the 314-residue chain is Probable cell division protein WhiA (314 aa).

The H-T-H motif DNA-binding region spans 274–308 (SLKELGEMVSTGPISKSGMNHRLRKLNELADKIRN).

The protein belongs to the WhiA family.

Functionally, involved in cell division and chromosome segregation. The polypeptide is Probable cell division protein WhiA (Staphylococcus epidermidis (strain ATCC 35984 / DSM 28319 / BCRC 17069 / CCUG 31568 / BM 3577 / RP62A)).